Consider the following 323-residue polypeptide: 2-methylene-furan-3-one reductase (323 aa).

Residues Lys59, 174-175, 197-200, Tyr216, Ile254, 265-267, and 312-313 each bind NADP(+); these read GV, STKK, FVL, and RA. Lys59 is a binding site for substrate.

This sequence belongs to the zinc-containing alcohol dehydrogenase family. Quinone oxidoreductase subfamily. Monomer. Post-translationally, the N-terminus is blocked. Expressed in parenchyma tissues of red fruits. Not found in vascular tissues. Also detected in the achenes.

It carries out the reaction 4-hydroxy-2,5-dimethyl-furan-3(2H)-one + NADP(+) = 4-hydroxy-5-methyl-2-methylenefuran-3(2H)-one + NADPH + H(+). In terms of biological role, enone oxidoreductase involved in the biosynthesis of 4-hydroxy-2,5-dimethyl-3(2H)-furanone (HDMF or furaneol), the key flavor compound in strawberries. Can use both NADH and NADPH as the electron donor. The sequence is that of 2-methylene-furan-3-one reductase (EO) from Fragaria ananassa (Strawberry).